The chain runs to 163 residues: MPSFDVVNKVEMQELDNAVNNVKKEVDTRYDFRNSVTEIELHRGDKRIHLLAGDEMKMRALQDMLQSHCIRRKVDPKCLEFKDIEPTSKGQVKRDVVIQEGITKDVAQKIVKKIKDSKLKVQAAIQDDQVRVTGKKIDDLQEVIQLLRGEEFGVPLQFVNMKA.

Belongs to the YajQ family.

Its function is as follows. Nucleotide-binding protein. The chain is Nucleotide-binding protein DvMF_3058 from Nitratidesulfovibrio vulgaris (strain DSM 19637 / Miyazaki F) (Desulfovibrio vulgaris).